Consider the following 443-residue polypeptide: Phosphoribosylamine--glycine ligase (443 aa).

Residues 109-324 (RNLFKKYNIK…FLDVCFGISN (216 aa)) enclose the ATP-grasp domain. ATP is bound at residue 140–202 (MTGLGKDVVV…EEKLVGVEFT (63 aa)). The Mg(2+) site is built by Gln282, Glu294, and Asn296. 3 residues coordinate Mn(2+): Gln282, Glu294, and Asn296.

It belongs to the GARS family. Mg(2+) is required as a cofactor. Requires Mn(2+) as cofactor.

The enzyme catalyses 5-phospho-beta-D-ribosylamine + glycine + ATP = N(1)-(5-phospho-beta-D-ribosyl)glycinamide + ADP + phosphate + H(+). Its pathway is purine metabolism; IMP biosynthesis via de novo pathway; N(1)-(5-phospho-D-ribosyl)glycinamide from 5-phospho-alpha-D-ribose 1-diphosphate: step 2/2. The chain is Phosphoribosylamine--glycine ligase from Methanococcus vannielii (strain ATCC 35089 / DSM 1224 / JCM 13029 / OCM 148 / SB).